A 602-amino-acid chain; its full sequence is Sodium- and chloride-dependent GABA transporter 2 (602 aa).

A compositionally biased stretch (polar residues) spans 1–13 (MDSRVSGTTSNGE). Residues 1-22 (MDSRVSGTTSNGETKPVYPVME) form a disordered region. Residues 1 to 40 (MDSRVSGTTSNGETKPVYPVMEKKEEDGTLERGHWNNKME) lie on the Cytoplasmic side of the membrane. Helical transmembrane passes span 41–61 (FVLS…FPYL), 68–88 (GAFF…VFLL), and 121–141 (IVIL…FYLF). The Extracellular portion of the chain corresponds to 142–206 (SSFTIDLPWG…GIQHLGALRW (65 aa)). Residues Cys153 and Cys162 are joined by a disulfide bond. N-linked (GlcNAc...) asparagine glycosylation is present at Asn173. Transmembrane regions (helical) follow at residues 207–227 (ELAL…WKGV) and 233–253 (VVYF…IRGV). An N-linked (GlcNAc...) asparagine glycan is attached at Asn269. The next 7 helical transmembrane spans lie at 282–302 (AGTQ…ALGS), 319–339 (FLNS…LGFM), 366–386 (VVML…VVLL), 418–438 (VLIL…LTEG), 453–473 (GMCL…VYGA), 490–510 (PLIK…TFLF), and 528–548 (WWGD…IPAW). Residues 549–602 (SLYRLGTLKGPFRERIRQLMCPAEDLPQRNPAGPSAPATPRTSLLRLTELESHC) are Cytoplasmic-facing. Thr587 is subject to Phosphothreonine. The residue at position 591 (Ser591) is a Phosphoserine.

The protein belongs to the sodium:neurotransmitter symporter (SNF) (TC 2.A.22) family. SLC6A13 subfamily. As to expression, expressed in brain, kidney, lung, liver and testis.

Its subcellular location is the cell membrane. The protein resides in the basolateral cell membrane. It carries out the reaction 4-aminobutanoate(out) + chloride(out) + 2 Na(+)(out) = 4-aminobutanoate(in) + chloride(in) + 2 Na(+)(in). The catalysed reaction is taurine(out) + chloride(out) + 2 Na(+)(out) = taurine(in) + chloride(in) + 2 Na(+)(in). It catalyses the reaction beta-alanine(out) + chloride(out) + 2 Na(+)(out) = beta-alanine(in) + chloride(in) + 2 Na(+)(in). The enzyme catalyses hypotaurine(out) + chloride(out) + 2 Na(+)(out) = hypotaurine(in) + chloride(in) + 2 Na(+)(in). Its activity is regulated as follows. GABA transport is inhibited by beta-alanine, 2,3-diaminopropionic acid and SNAP-5114. In terms of biological role, mediates sodium- and chloride-dependent transport of gamma-aminobutyric acid (GABA). Mediates transport of beta-alanine. Can also mediate transport of taurine and hypotaurine. The chain is Sodium- and chloride-dependent GABA transporter 2 (SLC6A13) from Homo sapiens (Human).